Consider the following 1152-residue polypeptide: DNA-directed RNA polymerase subunit beta' (1152 aa).

The Zn(2+) site is built by C60, C62, C75, and C78. 3 residues coordinate Mg(2+): D449, D451, and D453. C779, C853, C860, and C863 together coordinate Zn(2+).

Belongs to the RNA polymerase beta' chain family. As to quaternary structure, the RNAP catalytic core consists of 2 alpha, 1 beta, 1 beta' and 1 omega subunit. When a sigma factor is associated with the core the holoenzyme is formed, which can initiate transcription. The cofactor is Mg(2+). Requires Zn(2+) as cofactor.

The catalysed reaction is RNA(n) + a ribonucleoside 5'-triphosphate = RNA(n+1) + diphosphate. DNA-dependent RNA polymerase catalyzes the transcription of DNA into RNA using the four ribonucleoside triphosphates as substrates. The polypeptide is DNA-directed RNA polymerase subunit beta' (Carboxydothermus hydrogenoformans (strain ATCC BAA-161 / DSM 6008 / Z-2901)).